We begin with the raw amino-acid sequence, 953 residues long: ALS2 C-terminal-like protein (953 aa).

MORN repeat units follow at residues 358-380, 381-403, 409-431, 432-452, 459-479, 483-505, 506-528, and 529-552; these read YEGE…DGRN, HVGN…QASE, YKCH…TDEV, YKGY…SGPQ, YTGH…DGDR, YIGM…AGVC, YQGT…DDSL, and YEGT…NGFT. The region spanning 796-942 is the VPS9 domain; it reads LFPDTQLLEF…IQKEDMRLHR (147 aa).

In terms of assembly, homodimer. Forms a heteromeric complex with ALS2. Interacts with ALS2 and RAB5A. In terms of tissue distribution, expressed in heart and kidney.

The protein localises to the cytoplasm. In terms of biological role, acts as a guanine nucleotide exchange factor (GEF) for Rab5 GTPase. Regulates the ALS2-mediated endosome dynamics. The sequence is that of ALS2 C-terminal-like protein (ALS2CL) from Homo sapiens (Human).